Reading from the N-terminus, the 295-residue chain is Shikimate dehydrogenase (NADP(+)) (295 aa).

Residues S24 to S26 and T71 each bind shikimate. Catalysis depends on K75, which acts as the Proton acceptor. E87 serves as a coordination point for NADP(+). Residues N96 and D111 each contribute to the shikimate site. Residues G136–A140, N160–R165, and M233 each bind NADP(+). Residue Y235 participates in shikimate binding. G256 serves as a coordination point for NADP(+).

Belongs to the shikimate dehydrogenase family. In terms of assembly, homodimer.

It carries out the reaction shikimate + NADP(+) = 3-dehydroshikimate + NADPH + H(+). Its pathway is metabolic intermediate biosynthesis; chorismate biosynthesis; chorismate from D-erythrose 4-phosphate and phosphoenolpyruvate: step 4/7. Involved in the biosynthesis of the chorismate, which leads to the biosynthesis of aromatic amino acids. Catalyzes the reversible NADPH linked reduction of 3-dehydroshikimate (DHSA) to yield shikimate (SA). The polypeptide is Shikimate dehydrogenase (NADP(+)) (Cupriavidus necator (strain ATCC 17699 / DSM 428 / KCTC 22496 / NCIMB 10442 / H16 / Stanier 337) (Ralstonia eutropha)).